We begin with the raw amino-acid sequence, 113 residues long: uncharacterized protein (113 aa).

2 disordered regions span residues 1 to 22 (MGEH…PLAQ) and 90 to 113 (DGRH…SDDL). The segment covering 90 to 99 (DGRHTTESSF) has biased composition (basic and acidic residues). Residues 100-113 (EHSSPSRSPQSDDL) show a composition bias toward low complexity.

This is an uncharacterized protein from Mycobacterium tuberculosis (strain CDC 1551 / Oshkosh).